Reading from the N-terminus, the 213-residue chain is Cysteine dioxygenase (213 aa).

Fe cation is bound by residues His-100, His-102, and His-160. The 3'-(S-cysteinyl)-tyrosine (Cys-Tyr) cross-link spans 107 to 177 (CVMKVLKGSL…TNFAISLHLY (71 aa)).

Belongs to the cysteine dioxygenase family. Requires Fe cation as cofactor. Post-translationally, the thioether cross-link between Cys-107 and Tyr-177 plays a structural role through stabilizing the Fe(2+) ion, and prevents the production of highly damaging free hydroxyl radicals by holding the oxygen radical via hydroxyl hydrogen.

The enzyme catalyses L-cysteine + O2 = 3-sulfino-L-alanine + H(+). The sequence is that of Cysteine dioxygenase (CDO1) from Ajellomyces capsulatus (strain G186AR / H82 / ATCC MYA-2454 / RMSCC 2432) (Darling's disease fungus).